We begin with the raw amino-acid sequence, 363 residues long: Type-2 angiotensin II receptor (363 aa).

Over 1–45 (MKDNFSFAATSRNITSSLPFVNLNMSGTNDLIFNCSHKPSDKHLE) the chain is Extracellular. N-linked (GlcNAc...) asparagine glycans are attached at residues Asn4, Asn13, Asn24, and Asn34. 2 disulfide bridges follow: Cys35–Cys290 and Cys117–Cys195. Residues 46-70 (AIPVLYYLIFVIGFAVNIIVVSLFC) form a helical membrane-spanning segment. Topologically, residues 71-80 (CQKGPKKVSS) are cytoplasmic. A helical transmembrane segment spans residues 81 to 104 (IYIFNLAVADLLLLATLPLWATYY). Residues Tyr103 and Tyr104 each coordinate angiotensin II. The Extracellular portion of the chain corresponds to 105-114 (SYRYDWLFGP). Residues 115 to 140 (VMCKVFGSFLTLNMFASIFFITCMSV) form a helical membrane-spanning segment. The Cytoplasmic segment spans residues 141-159 (DRYQSVIYPFLSQRRNPWQ). A helical transmembrane segment spans residues 160–181 (ASYVVPLVWCMACLSSLPTFYF). Angiotensin II-binding residues include Arg182, Tyr204, and Lys215. Topologically, residues 182 to 206 (RDVRTIEYLGVNACVMAFPPEKYAQ) are extracellular. A helical transmembrane segment spans residues 207–232 (WSAGIALMKNVLGFIIPLIFIATCYF). Residues 233–257 (GIRKHLLKTNSYGKNRITRDQVLKM) lie on the Cytoplasmic side of the membrane. A helical membrane pass occupies residues 258-281 (AAAVVLAFIICWLPFHVLTFLDAL). Asp279 is a binding site for angiotensin II. Residues 282–294 (SWMGIINSCEVMA) lie on the Extracellular side of the membrane. The chain crosses the membrane as a helical span at residues 295-320 (VIDLALPFAILLGFTNSCVNPFLYCF). Position 297 (Asp297) interacts with angiotensin II. Over 321–363 (VGNRFQQKLRSMFRVPITWLQGKRETMSCRKSSSLREMDTFVS) the chain is Cytoplasmic. The segment at 324-333 (RFQQKLRSMF) is helix VIII. Ser354 bears the Phosphoserine; by PKC mark.

This sequence belongs to the G-protein coupled receptor 1 family. In terms of assembly, interacts with MTUS1.

The protein localises to the cell membrane. Functionally, receptor for angiotensin II, a vasoconstricting peptide. Signals primarily via a non-canonical G-protein- and beta-arrestin independent pathways. Cooperates with MTUS1 to inhibit ERK2 activation and cell proliferation. The polypeptide is Type-2 angiotensin II receptor (AGTR2) (Meriones unguiculatus (Mongolian jird)).